The chain runs to 60 residues: DNA-binding protein 7c (60 aa).

The tract at residues aspartate 37 to lysine 60 is disordered. Residues valine 46–lysine 60 are compositionally biased toward basic and acidic residues.

The protein belongs to the 7 kDa DNA-binding/endoribonuclease P2 family. In terms of assembly, monomer.

It localises to the cytoplasm. Can constrain negative DNA supercoils. May be involved in maintaining the integrity of the genome at high temperature. This is DNA-binding protein 7c from Acidianus hospitalis (strain W1).